Consider the following 128-residue polypeptide: Ribosome-binding factor A (128 aa).

Belongs to the RbfA family. As to quaternary structure, monomer. Binds 30S ribosomal subunits, but not 50S ribosomal subunits or 70S ribosomes.

It localises to the cytoplasm. In terms of biological role, one of several proteins that assist in the late maturation steps of the functional core of the 30S ribosomal subunit. Associates with free 30S ribosomal subunits (but not with 30S subunits that are part of 70S ribosomes or polysomes). Required for efficient processing of 16S rRNA. May interact with the 5'-terminal helix region of 16S rRNA. The chain is Ribosome-binding factor A from Haemophilus influenzae (strain ATCC 51907 / DSM 11121 / KW20 / Rd).